Here is a 491-residue protein sequence, read N- to C-terminus: Ketol-acid reductoisomerase (NADP(+)) (491 aa).

The 194-residue stretch at 15–208 (AQLGKCRFMG…GGHRAGVLES (194 aa)) folds into the KARI N-terminal Rossmann domain. Residues 45-48 (CGAQ), Arg-68, Arg-76, Ser-78, and 108-110 (DKQ) contribute to the NADP(+) site. The active site involves His-132. Gly-158 is an NADP(+) binding site. 2 consecutive KARI C-terminal knotted domains span residues 209 to 344 (SFVA…TAPQ) and 345 to 484 (YEGK…MTDM). Residues Asp-217, Glu-221, Glu-389, and Glu-393 each coordinate Mg(2+). Ser-414 is a substrate binding site.

This sequence belongs to the ketol-acid reductoisomerase family. The cofactor is Mg(2+).

The catalysed reaction is (2R)-2,3-dihydroxy-3-methylbutanoate + NADP(+) = (2S)-2-acetolactate + NADPH + H(+). It carries out the reaction (2R,3R)-2,3-dihydroxy-3-methylpentanoate + NADP(+) = (S)-2-ethyl-2-hydroxy-3-oxobutanoate + NADPH + H(+). It functions in the pathway amino-acid biosynthesis; L-isoleucine biosynthesis; L-isoleucine from 2-oxobutanoate: step 2/4. It participates in amino-acid biosynthesis; L-valine biosynthesis; L-valine from pyruvate: step 2/4. Functionally, involved in the biosynthesis of branched-chain amino acids (BCAA). Catalyzes an alkyl-migration followed by a ketol-acid reduction of (S)-2-acetolactate (S2AL) to yield (R)-2,3-dihydroxy-isovalerate. In the isomerase reaction, S2AL is rearranged via a Mg-dependent methyl migration to produce 3-hydroxy-3-methyl-2-ketobutyrate (HMKB). In the reductase reaction, this 2-ketoacid undergoes a metal-dependent reduction by NADPH to yield (R)-2,3-dihydroxy-isovalerate. In Escherichia fergusonii (strain ATCC 35469 / DSM 13698 / CCUG 18766 / IAM 14443 / JCM 21226 / LMG 7866 / NBRC 102419 / NCTC 12128 / CDC 0568-73), this protein is Ketol-acid reductoisomerase (NADP(+)).